A 247-amino-acid chain; its full sequence is Ribonuclease 3 (247 aa).

An RNase III domain is found at 23 to 149 (HADLLERLGV…LLGAIFRQHG (127 aa)). A Mg(2+)-binding site is contributed by Glu-62. Residue Asp-66 is part of the active site. Asp-135 and Glu-138 together coordinate Mg(2+). The active site involves Glu-138. Positions 176–244 (DWKTTLQEEL…ARQAFLKLRE (69 aa)) constitute a DRBM domain.

The protein belongs to the ribonuclease III family. In terms of assembly, homodimer. Mg(2+) is required as a cofactor.

It localises to the cytoplasm. It carries out the reaction Endonucleolytic cleavage to 5'-phosphomonoester.. In terms of biological role, digests double-stranded RNA. Involved in the processing of primary rRNA transcript to yield the immediate precursors to the large and small rRNAs (23S and 16S). Processes some mRNAs, and tRNAs when they are encoded in the rRNA operon. Processes pre-crRNA and tracrRNA of type II CRISPR loci if present in the organism. The polypeptide is Ribonuclease 3 (Corynebacterium efficiens (strain DSM 44549 / YS-314 / AJ 12310 / JCM 11189 / NBRC 100395)).